A 265-amino-acid polypeptide reads, in one-letter code: MRKNTYAMRYVAGQPAERILPPGAFAGVSPVYPAGTPLSSDEKIRVLVWNIFKQQRAEWQSVLKNFGKDAHLVLLQEAQTTPELVRFATSNYLAADQVPALVLPQHPSGVMTLASAHPIYCCPLREREPILRLPKSALVTVYPLPDARLLMVVNIHAVNFSLGVDVYSKQLLPIGDQIAHHSGPVIMAGDFNAWSRPRMNALYRFAREMSLREVRFSDDQRRRAFGRPLDFVFYRGLSVHDASVLVTRASDHNPLLVEFSPGKPD.

The protein belongs to the UPF0294 family.

It localises to the cytoplasm. The protein is UPF0294 protein KPK_4510 of Klebsiella pneumoniae (strain 342).